The sequence spans 287 residues: Inactive phospholipid phosphatase 7 (287 aa).

The segment at 1 to 75 (MPANQTRSRA…NNKDKKELPE (75 aa)) is disordered. The Cytoplasmic portion of the chain corresponds to 1-120 (MPANQTRSRA…SSSWGSVRSM (120 aa)). Positions 31-40 (SGGGGGGGES) are enriched in gly residues. Residues 49-65 (QRQQQNQQQQGDNPQPE) show a composition bias toward low complexity. A helical transmembrane segment spans residues 121-141 (VKLLALTGHGIPWVFGTIVCL). At 142–146 (MRSNT) the chain is on the extracellular side. The helical transmembrane segment at 147–167 (LAGQEVLVNLLLALLLDVMTV) threads the bilayer. The Cytoplasmic segment spans residues 168–215 (SGMQKLVKRKGPWEMPPGFFDYLAMDIYSFPAAHASRAVMVSKFLLAH). Residues 216-236 (LVLAVPLRILLVLWAILVGIS) traverse the membrane as a helical segment. Residues 237–247 (RVLLGRHHLTD) are Extracellular-facing. The helical transmembrane segment at 248–268 (VGCGFALGFLHYSLVEMVWLS) threads the bilayer. The Cytoplasmic segment spans residues 269-287 (SNTCQTLISIGTFNWSPLY).

The protein belongs to the PA-phosphatase related phosphoesterase family.

It localises to the nucleus envelope. The protein localises to the endoplasmic reticulum membrane. Its subcellular location is the membrane. In terms of biological role, plays a role as negative regulator of myoblast differentiation, in part through effects on MTOR signaling. Has no detectable enzymatic activity. In Danio rerio (Zebrafish), this protein is Inactive phospholipid phosphatase 7.